The sequence spans 305 residues: Aquaporin NIP6-1 (305 aa).

The disordered stretch occupies residues 1 to 30; that stretch reads MDHEEIPSTPSTPATTPGTPGAPLFGGFEG. Low complexity predominate over residues 7 to 23; the sequence is PSTPSTPATTPGTPGAP. 2 helical membrane passes run 82–102 and 111–131; these read LGAEFVGTLILIFAGTATAIV and TLIGCAASAGLAVMIVILSTG. The NPA 1 signature appears at 139-141; sequence NPA. 3 helical membrane-spanning segments follow: residues 159–179, 194–214, and 221–241; these read VYIGAQVMASVSAAFALKAVF, LSQAFALEFIISFNLMFVVTA, and AVGELAGIAVGATVMLNILIA. The short motif at 250 to 252 is the NPA 2 element; sequence NPV. Residues 267–287 form a helical membrane-spanning segment; it reads IWVYLTAPILGALIGAGTYTI. A Phosphoserine modification is found at serine 302.

Belongs to the MIP/aquaporin (TC 1.A.8) family. NIP (TC 1.A.8.12) subfamily. As to expression, expressed in roots.

The protein resides in the membrane. Functionally, transports glycerol, urea and formamide, in Xenopus laevis oocytes. Very low water transport activity. This chain is Aquaporin NIP6-1 (NIP6-1), found in Arabidopsis thaliana (Mouse-ear cress).